The primary structure comprises 77 residues: Large ribosomal subunit protein uL29 (77 aa).

Belongs to the universal ribosomal protein uL29 family.

This chain is Large ribosomal subunit protein uL29, found in Methanopyrus kandleri (strain AV19 / DSM 6324 / JCM 9639 / NBRC 100938).